Reading from the N-terminus, the 341-residue chain is Biotin synthase (341 aa).

The region spanning 40–264 is the Radical SAM core domain; that stretch reads NSVKLNYLVN…VAPRSELRIA (225 aa). [4Fe-4S] cluster is bound by residues C55, C59, and C62. [2Fe-2S] cluster-binding residues include C99, C132, C192, and R262. Positions 317–341 are disordered; sequence ASAPQGGVEPVLRKRGAGTELQPNA.

This sequence belongs to the radical SAM superfamily. Biotin synthase family. As to quaternary structure, homodimer. [4Fe-4S] cluster is required as a cofactor. It depends on [2Fe-2S] cluster as a cofactor.

The enzyme catalyses (4R,5S)-dethiobiotin + (sulfur carrier)-SH + 2 reduced [2Fe-2S]-[ferredoxin] + 2 S-adenosyl-L-methionine = (sulfur carrier)-H + biotin + 2 5'-deoxyadenosine + 2 L-methionine + 2 oxidized [2Fe-2S]-[ferredoxin]. The protein operates within cofactor biosynthesis; biotin biosynthesis; biotin from 7,8-diaminononanoate: step 2/2. Catalyzes the conversion of dethiobiotin (DTB) to biotin by the insertion of a sulfur atom into dethiobiotin via a radical-based mechanism. This is Biotin synthase from Renibacterium salmoninarum (strain ATCC 33209 / DSM 20767 / JCM 11484 / NBRC 15589 / NCIMB 2235).